The sequence spans 76 residues: ATP synthase subunit c (76 aa).

Transmembrane regions (helical) follow at residues 8–28 (LLAA…GVGI) and 55–75 (VAFA…LIFV).

The protein belongs to the ATPase C chain family. F-type ATPases have 2 components, F(1) - the catalytic core - and F(0) - the membrane proton channel. F(1) has five subunits: alpha(3), beta(3), gamma(1), delta(1), epsilon(1). F(0) has three main subunits: a(1), b(2) and c(10-14). The alpha and beta chains form an alternating ring which encloses part of the gamma chain. F(1) is attached to F(0) by a central stalk formed by the gamma and epsilon chains, while a peripheral stalk is formed by the delta and b chains.

Its subcellular location is the cell membrane. Its function is as follows. F(1)F(0) ATP synthase produces ATP from ADP in the presence of a proton or sodium gradient. F-type ATPases consist of two structural domains, F(1) containing the extramembraneous catalytic core and F(0) containing the membrane proton channel, linked together by a central stalk and a peripheral stalk. During catalysis, ATP synthesis in the catalytic domain of F(1) is coupled via a rotary mechanism of the central stalk subunits to proton translocation. Key component of the F(0) channel; it plays a direct role in translocation across the membrane. A homomeric c-ring of between 10-14 subunits forms the central stalk rotor element with the F(1) delta and epsilon subunits. The polypeptide is ATP synthase subunit c (Dehalococcoides mccartyi (strain ATCC BAA-2266 / KCTC 15142 / 195) (Dehalococcoides ethenogenes (strain 195))).